The following is a 248-amino-acid chain: Delayed minus-nitrogen induction protein 2 (248 aa).

4 consecutive transmembrane segments (helical) span residues 26–46, 110–130, 144–164, and 186–206; these read IFSN…CCSC, VHPV…VLTI, ISCL…MALA, and GVAA…FSLI.

This sequence belongs to the SUR7 family.

The protein localises to the membrane. In Schizosaccharomyces pombe (strain 972 / ATCC 24843) (Fission yeast), this protein is Delayed minus-nitrogen induction protein 2 (dni2).